The following is a 290-amino-acid chain: Ribosomal RNA small subunit methyltransferase A (290 aa).

S-adenosyl-L-methionine-binding residues include Asn27, Leu29, Gly54, Glu75, Asp100, and Asn125.

It belongs to the class I-like SAM-binding methyltransferase superfamily. rRNA adenine N(6)-methyltransferase family. RsmA subfamily.

The protein localises to the cytoplasm. The catalysed reaction is adenosine(1518)/adenosine(1519) in 16S rRNA + 4 S-adenosyl-L-methionine = N(6)-dimethyladenosine(1518)/N(6)-dimethyladenosine(1519) in 16S rRNA + 4 S-adenosyl-L-homocysteine + 4 H(+). Specifically dimethylates two adjacent adenosines (A1518 and A1519) in the loop of a conserved hairpin near the 3'-end of 16S rRNA in the 30S particle. May play a critical role in biogenesis of 30S subunits. In Streptococcus pneumoniae (strain ATCC BAA-255 / R6), this protein is Ribosomal RNA small subunit methyltransferase A.